Here is a 402-residue protein sequence, read N- to C-terminus: Probable 2,3-bisphosphoglycerate-independent phosphoglycerate mutase (402 aa).

Belongs to the BPG-independent phosphoglycerate mutase family. A-PGAM subfamily.

The enzyme catalyses (2R)-2-phosphoglycerate = (2R)-3-phosphoglycerate. Its pathway is carbohydrate degradation; glycolysis; pyruvate from D-glyceraldehyde 3-phosphate: step 3/5. Its function is as follows. Catalyzes the interconversion of 2-phosphoglycerate and 3-phosphoglycerate. The protein is Probable 2,3-bisphosphoglycerate-independent phosphoglycerate mutase of Thermosipho africanus (strain TCF52B).